The chain runs to 424 residues: 3-oxo-tetronate kinase (424 aa).

Residues S264, 363-366 (GGET), and G408 contribute to the ATP site.

Belongs to the four-carbon acid sugar kinase family.

The catalysed reaction is 3-dehydro-L-erythronate + ATP = 3-dehydro-4-O-phospho-L-erythronate + ADP + H(+). It catalyses the reaction 3-dehydro-D-erythronate + ATP = 3-dehydro-4-O-phospho-D-erythronate + ADP + H(+). Its function is as follows. Catalyzes the ATP-dependent phosphorylation of 3-oxo-tetronate to 3-oxo-tetronate 4-phosphate. The protein is 3-oxo-tetronate kinase of Methylobacterium radiotolerans (strain ATCC 27329 / DSM 1819 / JCM 2831 / NBRC 15690 / NCIMB 10815 / 0-1).